The primary structure comprises 72 residues: DNA-directed RNA polymerase subunit omega (72 aa).

It belongs to the RNA polymerase subunit omega family. As to quaternary structure, the RNAP catalytic core consists of 2 alpha, 1 beta, 1 beta' and 1 omega subunit. When a sigma factor is associated with the core the holoenzyme is formed, which can initiate transcription.

The enzyme catalyses RNA(n) + a ribonucleoside 5'-triphosphate = RNA(n+1) + diphosphate. In terms of biological role, promotes RNA polymerase assembly. Latches the N- and C-terminal regions of the beta' subunit thereby facilitating its interaction with the beta and alpha subunits. This chain is DNA-directed RNA polymerase subunit omega, found in Lactobacillus johnsonii (strain CNCM I-12250 / La1 / NCC 533).